Here is a 211-residue protein sequence, read N- to C-terminus: Large ribosomal subunit protein uL3 (211 aa).

Position 150 is an N5-methylglutamine (Gln150).

The protein belongs to the universal ribosomal protein uL3 family. As to quaternary structure, part of the 50S ribosomal subunit. Forms a cluster with proteins L14 and L19. Post-translationally, methylated by PrmB.

One of the primary rRNA binding proteins, it binds directly near the 3'-end of the 23S rRNA, where it nucleates assembly of the 50S subunit. The polypeptide is Large ribosomal subunit protein uL3 (Pseudomonas savastanoi pv. phaseolicola (strain 1448A / Race 6) (Pseudomonas syringae pv. phaseolicola (strain 1448A / Race 6))).